The chain runs to 346 residues: Selenide, water dikinase (346 aa).

Cys15 is an active-site residue. ATP-binding positions include Lys18 and 46–48 (SKD). A Mg(2+)-binding site is contributed by Asp49. Residues Asp66, Asp89, and 137-139 (GHS) contribute to the ATP site. A Mg(2+)-binding site is contributed by Asp89. Residue Asp225 coordinates Mg(2+).

Belongs to the selenophosphate synthase 1 family. Class I subfamily. In terms of assembly, homodimer. Requires Mg(2+) as cofactor.

The enzyme catalyses hydrogenselenide + ATP + H2O = selenophosphate + AMP + phosphate + 2 H(+). Functionally, synthesizes selenophosphate from selenide and ATP. In Photobacterium profundum (strain SS9), this protein is Selenide, water dikinase.